The chain runs to 148 residues: Aspartate 1-decarboxylase (148 aa).

The active-site Schiff-base intermediate with substrate; via pyruvic acid is serine 25. Serine 25 is modified (pyruvic acid (Ser)). Threonine 57 contributes to the substrate binding site. Tyrosine 58 (proton donor) is an active-site residue. 73 to 75 contributes to the substrate binding site; it reads GAA.

It belongs to the PanD family. Heterooctamer of four alpha and four beta subunits. Requires pyruvate as cofactor. Is synthesized initially as an inactive proenzyme, which is activated by self-cleavage at a specific serine bond to produce a beta-subunit with a hydroxyl group at its C-terminus and an alpha-subunit with a pyruvoyl group at its N-terminus.

It is found in the cytoplasm. The enzyme catalyses L-aspartate + H(+) = beta-alanine + CO2. The protein operates within cofactor biosynthesis; (R)-pantothenate biosynthesis; beta-alanine from L-aspartate: step 1/1. Its function is as follows. Catalyzes the pyruvoyl-dependent decarboxylation of aspartate to produce beta-alanine. This Rhodococcus erythropolis (strain PR4 / NBRC 100887) protein is Aspartate 1-decarboxylase.